We begin with the raw amino-acid sequence, 610 residues long: MNSQELKKRQENIRNFSIIAHIDHGKSTLADRILEKTETVSSREMQAQLLDSMDLERERGITIKLNAIELNYKAKNGQDYIFHLIDTPGHVDFTYEVSRSLAACEGAVLVVDAAQGIEAQTLANVYLALDNDLEILPVINKIDLPAADPERVRQEIEDVIGLDASEAVLASAKSGIGIEAILEQIVEKVPAPSGDVDKPLQALIFDSVYDAYRGVILQVRVVNGMVKPGDTIQMMSNGKTFDVTEVGIFTPKAIGRDFLATGDVGYIAASIKTVADTRVGDTVTLATNPAAEPLHGYKQMNPMVFAGIYPIESNKYNDLREALEKLQLNDASLQFEPETSQALGFGFRCGFLGLLHMDVIQERLEREFNIDLIMTAPSVVYHVNTTDGDMLEVSNPSEFPDPTKVDSIEEPYVKAQIMVPQEFVGAVMELAQRKRGDFVTMDYIDDNRVNVIYHIPLAEIVFDFFDKLKSSTRGYASFDYEIAEYRRSQLVKMDILLNGDKVDALSFIVHREFAYERGKLIVEKLKKIIPRQQFEVPIQAAIGQKIVARSDIKALRKNVLAKCYGGDVSRKRKLLEKQKAGKKRMKAIGSVEVPQEAFLSVLSMDDESKK.

The tr-type G domain maps to 11–193; sequence ENIRNFSIIA…QIVEKVPAPS (183 aa). GTP is bound by residues 23–28 and 140–143; these read DHGKST and NKID.

This sequence belongs to the TRAFAC class translation factor GTPase superfamily. Classic translation factor GTPase family. LepA subfamily.

The protein resides in the cell membrane. The catalysed reaction is GTP + H2O = GDP + phosphate + H(+). Required for accurate and efficient protein synthesis under certain stress conditions. May act as a fidelity factor of the translation reaction, by catalyzing a one-codon backward translocation of tRNAs on improperly translocated ribosomes. Back-translocation proceeds from a post-translocation (POST) complex to a pre-translocation (PRE) complex, thus giving elongation factor G a second chance to translocate the tRNAs correctly. Binds to ribosomes in a GTP-dependent manner. The polypeptide is Elongation factor 4 (Streptococcus equi subsp. zooepidemicus (strain MGCS10565)).